Here is a 58-residue protein sequence, read N- to C-terminus: Metallothionein (58 aa).

A beta region spans residues 1–29; the sequence is PDPCCAEGTCECEEGKCKAGCKCTSCRCS. A divalent metal cation is bound by residues cysteine 4, cysteine 5, cysteine 10, cysteine 12, cysteine 17, cysteine 21, cysteine 23, cysteine 26, cysteine 28, cysteine 31, cysteine 34, cysteine 38, cysteine 40, cysteine 46, cysteine 50, cysteine 54, cysteine 56, and cysteine 57. The tract at residues 30-58 is alpha; it reads PCEKCTSECECKSKEECAKNCTKPCSCCP.

Metallothioneins have a high content of cysteine residues that bind various heavy metals. Class I MTS in crustacea are involved in the sequestration of elevated levels of heavy-metal ions. In Potamon potamios, this protein is Metallothionein.